Here is a 449-residue protein sequence, read N- to C-terminus: Required for meiotic nuclear division protein 1 homolog (449 aa).

The N-terminal 12 residues, 1 to 12 (MPATLLRAVARS), are a transit peptide targeting the mitochondrion.

The protein belongs to the RMD1/sif2 family. Homooligomer.

The protein resides in the mitochondrion. Its function is as follows. Required for mitochondrial translation, possibly by coordinating the assembly or maintenance of the mitochondrial ribosome. The sequence is that of Required for meiotic nuclear division protein 1 homolog (RMND1) from Homo sapiens (Human).